Consider the following 380-residue polypeptide: RNA-binding motif protein, Y chromosome, family 9 (380 aa).

The 79-residue stretch at 8–86 (GKIFIGGLNI…KRIKVKQARR (79 aa)) folds into the RRM domain. Disordered regions lie at residues 82 to 226 (KQAR…STSR) and 279 to 358 (HEAP…YSAS). The segment covering 166–178 (RSATSAQTRSNTG) has biased composition (polar residues). Composition is skewed to basic and acidic residues over residues 180–190 (RGREPHRREIS) and 333–351 (IDRE…HSPK).

Testis-specific.

It localises to the nucleus. Functionally, RNA-binding protein which may be involved in spermatogenesis. May be required for sperm development, possibly by participating in pre-mRNA splicing in the testis. The sequence is that of RNA-binding motif protein, Y chromosome, family 9 from Mus musculus (Mouse).